The chain runs to 75 residues: MQKRSSFDSAEIMHRAEDLMQAASNRYRITVQVAQRAKRRRYEEFDAVEDPLMKPPIRAIIEMSDELTQPEIIGE.

The protein belongs to the RNA polymerase subunit omega family. In cyanobacteria the RNAP catalytic core is composed of 2 alpha, 1 beta, 1 beta', 1 gamma and 1 omega subunit. When a sigma factor is associated with the core the holoenzyme is formed, which can initiate transcription.

The enzyme catalyses RNA(n) + a ribonucleoside 5'-triphosphate = RNA(n+1) + diphosphate. Promotes RNA polymerase assembly. Latches the N- and C-terminal regions of the beta' subunit thereby facilitating its interaction with the beta and alpha subunits. This Picosynechococcus sp. (strain ATCC 27264 / PCC 7002 / PR-6) (Agmenellum quadruplicatum) protein is DNA-directed RNA polymerase subunit omega.